A 303-amino-acid polypeptide reads, in one-letter code: MIAMLTVLLYLALILEPRTAVQAGHLPKPIIWAEPGSVIAAYTSVIIWCWGSWEAQYYYLDKEKSVNPWDTEVPLENRNKTKFKIRFMTASYAGIYNCYYKSAAGFSEHSDAMELVMTGAYENPSLSVYPSSNVTSGVSISFKCSSSTLFGRFILIQEGKHGLSWTLDSQHQANQPTHATFVLDAVAPNHNGTFRCYGFFRNEPQVWSKPSNSLDLMISETKEQSCTPTEDGLETYQKILIGVLVSFLLLFFLLLFLILIGYQCRHKNKANASVKNTQSEDNAELNSWNPQNEDPPRELCTPR.

The first 23 residues, 1-23 (MIAMLTVLLYLALILEPRTAVQA), serve as a signal peptide directing secretion. Residues 24 to 238 (GHLPKPIIWA…TEDGLETYQK (215 aa)) are Extracellular-facing. Ig-like C2-type domains lie at 42 to 123 (YTSV…AYEN) and 124 to 212 (PSLS…KPSN). A disulfide bond links Cys49 and Cys98. N-linked (GlcNAc...) asparagine glycosylation is found at Asn79, Asn133, and Asn191. Cys144 and Cys196 are joined by a disulfide. A helical transmembrane segment spans residues 239–260 (ILIGVLVSFLLLFFLLLFLILI). Over 261-303 (GYQCRHKNKANASVKNTQSEDNAELNSWNPQNEDPPRELCTPR) the chain is Cytoplasmic. The span at 275-292 (KNTQSEDNAELNSWNPQN) shows a compositional bias: polar residues. A disordered region spans residues 275–303 (KNTQSEDNAELNSWNPQNEDPPRELCTPR).

In terms of assembly, monomer and homodimer. As to expression, expressed on mast cells (at protein level). Also expressed at much lower levels on natural killer cells (at protein level).

It localises to the cell membrane. In terms of biological role, plays a role in mast cell activation. The polypeptide is Leukocyte immunoglobulin-like receptor subfamily B member 4B (Mus musculus (Mouse)).